Here is a 134-residue protein sequence, read N- to C-terminus: Cerato-platanin (134 aa).

Positions 1–14 (MKFSILPMIASAMA) are cleaved as a signal peptide. A binding of oligomers of N-acetylglucosamine (GlcNAc) region spans residues 18 to 20 (SYD). Binding of N-acetylglucosamine tetramer (GlcNAc-4) stretches follow at residues 31-43 (SVAC…GLMA), 65-68 (GWDS), and 91-95 (DSGRG). 2 disulfides stabilise this stretch: Cys-34-Cys-71 and Cys-74-Cys-129. Residues 113-116 (AGRV) are binding of oligomers of N-acetylglucosamine (GlcNAc).

It belongs to the cerato-platanin family. In terms of assembly, monomer.

It localises to the secreted. It is found in the cell wall. Functionally, phytotoxin which causes production of phytoalexin in platanus acerifolia, platanus occidentalis and platanus orientalis. Induces cell necrosis in tobacco leaves, and in callus cells and leaves of P.acerifolia. Induces reactive oxygen species (ROS) synthesis, nitric oxide (NO) production and mitogen-activated protein kinases (MAPKs) phosphorylation in the leaves of A.thaliana and P.acerifolia. Results in H(2)O(2) production on the epidermis around the stomata, rapid closure of the stomata, reduced photosynthetic and CO(2) assimilation rate, and an increase in a number of volatile organic compound (VOC) emission in A.thaliana leaves. Induces overexpression of genes related to salicylic acid- and ethylene-signaling, camalexin synthesis, ROS production and oxidative stress, and genes of various receptor kinases, and down-regulation of a number of jasmonic acid (JA)-signaling genes in A.thaliana leaves. Renders resistance against C.platani in A.thaliana and P.acerifolia. Renders localised resistance of A.thaliana against infection by virulent foliar pathogens B.cinerea and P.syringae pv. tomato. Binds cellulose analog carboxymethyl cellulose (CMC). Expansin-like protein with probable fungal and plant cell wall loosening activity based on its non-enzymatic cellulose weakening activity in vitro. Increases glucose production by cellulase after pre-incubation of cellulose with this protein. In contrast, according to PubMed:23512479, no synergistic effect with cellulases. May have a structural role in the fungal cell wall based on its ability to bind chitin, but does not bind beta-1,3-glucan. In Ceratocystis fimbriata f. sp. platani, this protein is Cerato-platanin.